The following is a 322-amino-acid chain: Uridylate-specific endoribonuclease EndoU (322 aa).

The chain crosses the membrane as a helical span at residues 25–45 (FVIVGLLITIGILSWHFYEYF). An EndoU domain is found at 53–322 (TPDDVLTLSK…LIGTVYPDSS (270 aa)). Active-site residues include H200, H215, and K259.

Belongs to the ENDOU family. In terms of assembly, monomer. It depends on Mn(2+) as a cofactor. As to expression, predominantly expressed in head.

Its subcellular location is the membrane. The enzyme catalyses a ribonucleotidyl-ribonucleotide-RNA = a 3'-end 2',3'-cyclophospho-ribonucleotide-RNA + a 5'-end dephospho-ribonucleoside-RNA. Functionally, endoribonuclease that cleaves single-stranded RNAs at uridylates and releases products that have 2'-3'-cyclic phosphate termini. Preferentially cleaves single stranded RNA at poly-U sites with CU, UC and AU sites cleaved less efficiently. May target mRNAs encoding proteins involved in lipid metabolism to regulate their expression. Regulates levels of TBPH protein, but not mRNA, by an as yet unknown mechanism. Important for neuronal development or function. This chain is Uridylate-specific endoribonuclease EndoU, found in Drosophila melanogaster (Fruit fly).